A 78-amino-acid polypeptide reads, in one-letter code: Large ribosomal subunit protein uL29 (78 aa).

The protein belongs to the universal ribosomal protein uL29 family.

This is Large ribosomal subunit protein uL29 from Rhodococcus erythropolis (strain PR4 / NBRC 100887).